Reading from the N-terminus, the 298-residue chain is 2-dehydropantoate 2-reductase (298 aa).

Residues glycine 7 to glycine 12, asparagine 98, and alanine 124 each bind NADP(+). Substrate is bound at residue asparagine 98. Lysine 179 functions as the Proton donor in the catalytic mechanism. Positions 183, 187, 197, and 246 each coordinate substrate. Glutamate 258 contributes to the NADP(+) binding site.

Belongs to the ketopantoate reductase family.

Its subcellular location is the cytoplasm. The enzyme catalyses (R)-pantoate + NADP(+) = 2-dehydropantoate + NADPH + H(+). It functions in the pathway cofactor biosynthesis; (R)-pantothenate biosynthesis; (R)-pantoate from 3-methyl-2-oxobutanoate: step 2/2. Catalyzes the NADPH-dependent reduction of ketopantoate into pantoic acid. This chain is 2-dehydropantoate 2-reductase (panE), found in Bacillus subtilis (strain 168).